We begin with the raw amino-acid sequence, 255 residues long: Zinc-finger homeodomain protein 6 (255 aa).

Residues Met1–Gly35 are disordered. The span at Pro21–Gly35 shows a compositional bias: low complexity. Residues Tyr45 to Asp93 form a ZF-HD dimerization-type; degenerate zinc finger. Positions Pro106 to Pro126 are enriched in pro residues. Disordered regions lie at residues Pro106–Pro181 and Asn226–Gln255. Over residues Tyr139–Ser153 the composition is skewed to low complexity. Residues Arg172–Ser235 constitute a DNA-binding region (homeobox). Positions Arg240 to Gln255 are enriched in low complexity.

As to quaternary structure, homo- and heterodimer with other ZFHD proteins.

It localises to the nucleus. Putative transcription factor. This chain is Zinc-finger homeodomain protein 6 (ZHD6), found in Oryza sativa subsp. japonica (Rice).